The primary structure comprises 256 residues: MLQVQTIPSRQDNYIWLIKQGNQAIVVDPGESAPVIERLRQQSLNLKAIFVTHHHHDHVDGVAELLALYPQCAVYGPQITLTDVPQLQTMRDQDLISFPDLDLTFTVWHTPGHTAEHIVFHGHGALFCGDTLFSGGCGRLFSGTAEQMYHSLQRLASLPEDTLVYPAHEYTYNNLSYCLQAEPDNVFTIKRIKEVSKLRQQGCPTLPSTIGIEKQSNVFLRTHMPSVAVFAQNSSELYLENEIQIFAILREKKNNL.

7 residues coordinate Zn(2+): His-53, His-55, Asp-57, His-58, His-113, Asp-130, and His-168.

This sequence belongs to the metallo-beta-lactamase superfamily. Glyoxalase II family. Monomer. It depends on Zn(2+) as a cofactor.

It carries out the reaction an S-(2-hydroxyacyl)glutathione + H2O = a 2-hydroxy carboxylate + glutathione + H(+). It functions in the pathway secondary metabolite metabolism; methylglyoxal degradation; (R)-lactate from methylglyoxal: step 2/2. Its function is as follows. Thiolesterase that catalyzes the hydrolysis of S-D-lactoyl-glutathione to form glutathione and D-lactic acid. In Tolumonas auensis (strain DSM 9187 / NBRC 110442 / TA 4), this protein is Hydroxyacylglutathione hydrolase.